The primary structure comprises 199 residues: Thymidine kinase (199 aa).

ATP contacts are provided by residues 15 to 22 and 88 to 91; these read GSMFSGKS and DEVQ. Glu-89 functions as the Proton acceptor in the catalytic mechanism. Zn(2+)-binding residues include Cys-145, Cys-148, Cys-183, and His-186.

Belongs to the thymidine kinase family. Homotetramer.

It is found in the cytoplasm. The catalysed reaction is thymidine + ATP = dTMP + ADP + H(+). This Staphylococcus aureus (strain Mu50 / ATCC 700699) protein is Thymidine kinase.